We begin with the raw amino-acid sequence, 845 residues long: Protein translocase subunit SecA 1 (845 aa).

ATP is bound by residues Gln-85, 103–107, and Asp-492; that span reads GEGKT.

This sequence belongs to the SecA family. As to quaternary structure, monomer and homodimer. Part of the essential Sec protein translocation apparatus which comprises SecA, SecYEG and auxiliary proteins SecDF. Other proteins may also be involved.

The protein localises to the cell membrane. The protein resides in the cytoplasm. The enzyme catalyses ATP + H2O + cellular proteinSide 1 = ADP + phosphate + cellular proteinSide 2.. Functionally, part of the Sec protein translocase complex. Interacts with the SecYEG preprotein conducting channel. Has a central role in coupling the hydrolysis of ATP to the transfer of proteins into and across the cell membrane, serving as an ATP-driven molecular motor driving the stepwise translocation of polypeptide chains across the membrane. This chain is Protein translocase subunit SecA 1, found in Corynebacterium efficiens (strain DSM 44549 / YS-314 / AJ 12310 / JCM 11189 / NBRC 100395).